Here is a 255-residue protein sequence, read N- to C-terminus: Imidazole glycerol phosphate synthase subunit HisF (255 aa).

Active-site residues include Asp11 and Asp130.

Belongs to the HisA/HisF family. In terms of assembly, heterodimer of HisH and HisF.

The protein localises to the cytoplasm. It carries out the reaction 5-[(5-phospho-1-deoxy-D-ribulos-1-ylimino)methylamino]-1-(5-phospho-beta-D-ribosyl)imidazole-4-carboxamide + L-glutamine = D-erythro-1-(imidazol-4-yl)glycerol 3-phosphate + 5-amino-1-(5-phospho-beta-D-ribosyl)imidazole-4-carboxamide + L-glutamate + H(+). It participates in amino-acid biosynthesis; L-histidine biosynthesis; L-histidine from 5-phospho-alpha-D-ribose 1-diphosphate: step 5/9. Functionally, IGPS catalyzes the conversion of PRFAR and glutamine to IGP, AICAR and glutamate. The HisF subunit catalyzes the cyclization activity that produces IGP and AICAR from PRFAR using the ammonia provided by the HisH subunit. The sequence is that of Imidazole glycerol phosphate synthase subunit HisF from Rhodopseudomonas palustris (strain HaA2).